We begin with the raw amino-acid sequence, 1487 residues long: Chromosome partition protein MukB (1487 aa).

34–41 (GGNGAGKS) lines the ATP pocket. Coiled coils occupy residues 297 to 426 (SSRE…LEKA), 460 to 666 (ALKH…RLAS), 781 to 806 (RAAREQRLELLRSEREEVVEKHAKAA), 836 to 1111 (EQAL…RTFV), and 1210 to 1266 (VEAI…LSNI). A flexible hinge region spans residues 667 to 784 (PGGSNDPRLK…VIPLFGRAAR (118 aa)).

Belongs to the SMC family. MukB subfamily. As to quaternary structure, homodimerization via its hinge domain. Binds to DNA via its C-terminal region. Interacts, and probably forms a ternary complex, with MukE and MukF via its C-terminal region. The complex formation is stimulated by calcium or magnesium. Interacts with tubulin-related protein FtsZ.

The protein resides in the cytoplasm. The protein localises to the nucleoid. Its function is as follows. Plays a central role in chromosome condensation, segregation and cell cycle progression. Functions as a homodimer, which is essential for chromosome partition. Involved in negative DNA supercoiling in vivo, and by this means organize and compact chromosomes. May achieve or facilitate chromosome segregation by condensation DNA from both sides of a centrally located replisome during cell division. This is Chromosome partition protein MukB from Vibrio vulnificus (strain YJ016).